Consider the following 458-residue polypeptide: Tetratricopeptide repeat protein 23-like (458 aa).

2 coiled-coil regions span residues 175-198 and 246-278; these read GKQA…LNNG and TSEL…QAYS.

It is found in the cytoplasm. It localises to the cytoskeleton. Its subcellular location is the microtubule organizing center. The protein resides in the centrosome. The protein localises to the spindle. It is found in the midbody. The sequence is that of Tetratricopeptide repeat protein 23-like (Ttc23l) from Mus musculus (Mouse).